Here is a 331-residue protein sequence, read N- to C-terminus: E3 ubiquitin-protein ligase Siah2 (331 aa).

Positions 1–26 (MSRPSSAGGAAGGLGAGKAGGSKHGG) are disordered. Residues 9–26 (GAAGGLGAGKAGGSKHGG) are compositionally biased toward gly residues. The segment at 89 to 124 (CPVCFDYVLPPILQCQAGHLVCNQCRQKLSCCPTCR) adopts an RING-type zinc-finger fold. The tract at residues 139–331 (VASTLPFPCK…LGINVTISMC (193 aa)) is SBD. An SIAH-type zinc finger spans residues 142-202 (TLPFPCKYSS…VMPHLMHAHK (61 aa)). 8 residues coordinate Zn(2+): C147, C154, H166, C170, C177, C184, H196, and H201.

This sequence belongs to the SINA (Seven in absentia) family. Homodimer. In embryos it is expressed in all blastomeres starting at the mid-blastulla. After 20 somite stage, it is expressed mainly in the posterior part. Expressed in brain, including the eye, the cranial cavity, otic vesicle, optic chiasm and in the gut.

It carries out the reaction S-ubiquitinyl-[E2 ubiquitin-conjugating enzyme]-L-cysteine + [acceptor protein]-L-lysine = [E2 ubiquitin-conjugating enzyme]-L-cysteine + N(6)-ubiquitinyl-[acceptor protein]-L-lysine.. It functions in the pathway protein modification; protein ubiquitination. E3 ubiquitin-protein ligase that mediates ubiquitination and subsequent proteasomal degradation of target proteins. E3 ubiquitin ligases accept ubiquitin from an E2 ubiquitin-conjugating enzyme in the form of a thioester and then directly transfers the ubiquitin to targeted substrates. It probably triggers the ubiquitin-mediated degradation of different substrates. Induces cellular growth arrest by inhibiting the G2/M transition. May play a role in the regulation of the cellular clock function. The polypeptide is E3 ubiquitin-protein ligase Siah2 (siah2l) (Danio rerio (Zebrafish)).